The primary structure comprises 223 residues: Adenylate kinase 4, mitochondrial (223 aa).

A ribonucleoside 5'-triphosphate is bound at residue 15 to 20; the sequence is GSGKGT. The NMP stretch occupies residues 35–64; that stretch reads SSGHFLRENIKANTEVGEMAKQYIEKSLLV. AMP is bound by residues serine 36 and arginine 41. Position 60 is an N6-succinyllysine (lysine 60). Residues 62 to 64, 89 to 92, and glutamine 96 each bind AMP; these read LLV and GFPR. The LID stretch occupies residues 125 to 162; sequence RRWIHPPSGRVYNLDFNPPHVHGIDDVTGEPLVQQEDD. Residues arginine 126 and 135-136 contribute to the a ribonucleoside 5'-triphosphate site; that span reads VY. An AMP-binding site is contributed by arginine 170. Lysine 175 is subject to N6-acetyllysine. 2 positions are modified to N6-acetyllysine; alternate: lysine 179 and lysine 186. 2 positions are modified to N6-succinyllysine; alternate: lysine 179 and lysine 186. Position 199 (threonine 199) interacts with a ribonucleoside 5'-triphosphate.

The protein belongs to the adenylate kinase family. AK3 subfamily. In terms of assembly, monomer. Interacts with SLC25A5/ANT2.

It localises to the mitochondrion matrix. The enzyme catalyses a ribonucleoside 5'-phosphate + ATP = a ribonucleoside 5'-diphosphate + ADP. It carries out the reaction AMP + ATP = 2 ADP. It catalyses the reaction GTP + AMP = GDP + ADP. The catalysed reaction is CMP + ATP = CDP + ADP. The enzyme catalyses GTP + CMP = CDP + GDP. It carries out the reaction dAMP + ATP = dADP + ADP. It catalyses the reaction dCMP + ATP = dCDP + ADP. The catalysed reaction is a 2'-deoxyribonucleoside 5'-diphosphate + ATP = a 2'-deoxyribonucleoside 5'-triphosphate + ADP. The enzyme catalyses a ribonucleoside 5'-diphosphate + ATP = a ribonucleoside 5'-triphosphate + ADP. It carries out the reaction GDP + ATP = GTP + ADP. It catalyses the reaction CDP + GTP = CTP + GDP. The catalysed reaction is CDP + ATP = CTP + ADP. The enzyme catalyses UDP + ATP = UTP + ADP. It carries out the reaction GTP + UDP = UTP + GDP. It catalyses the reaction dADP + GTP = dATP + GDP. The catalysed reaction is dCDP + GTP = dCTP + GDP. The enzyme catalyses dCDP + ATP = dCTP + ADP. It carries out the reaction dGDP + ATP = dGTP + ADP. It catalyses the reaction dTDP + GTP = dTTP + GDP. The catalysed reaction is dTDP + ATP = dTTP + ADP. In terms of biological role, broad-specificity mitochondrial nucleoside phosphate kinase involved in cellular nucleotide homeostasis by catalyzing nucleoside-phosphate interconversions. Similar to other adenylate kinases, preferentially catalyzes the phosphorylation of the nucleoside monophosphate AMP with ATP as phosphate donor to produce ADP. Phosphorylates only AMP when using GTP as phosphate donor. In vitro, can also catalyze the phosphorylation of CMP, dAMP and dCMP and use GTP as an alternate phosphate donor. Moreover, exhibits a diphosphate kinase activity, producing ATP, CTP, GTP, UTP, TTP, dATP, dCTP and dGTP from the corresponding diphosphate substrates with either ATP or GTP as phosphate donors. Plays a role in controlling cellular ATP levels by regulating phosphorylation and activation of the energy sensor protein kinase AMPK. Plays a protective role in the cellular response to oxidative stress. The chain is Adenylate kinase 4, mitochondrial from Pongo abelii (Sumatran orangutan).